Here is a 190-residue protein sequence, read N- to C-terminus: MKLIIGLGNPEPRYDGTRHNVGFEVVDRLASSFQAPFKAGKGKYHEAKCSHRGESLLLVRPTTYMNHSGQAVMAAMQFYKVKRQDMLVICDDLNLPVGTIRLRAKGSDGGQNGLKHIIQQMGTNEFSRLRIGIRKGDMPPGSFSSFVLGKFDEEERKVIDRVVETSADAVLDFALNGIEHAMTQFNKTVA.

Tyrosine 14 is a tRNA binding site. Catalysis depends on histidine 19, which acts as the Proton acceptor. TRNA-binding residues include tyrosine 64, asparagine 66, and asparagine 112.

This sequence belongs to the PTH family. Monomer.

It localises to the cytoplasm. The enzyme catalyses an N-acyl-L-alpha-aminoacyl-tRNA + H2O = an N-acyl-L-amino acid + a tRNA + H(+). In terms of biological role, hydrolyzes ribosome-free peptidyl-tRNAs (with 1 or more amino acids incorporated), which drop off the ribosome during protein synthesis, or as a result of ribosome stalling. Catalyzes the release of premature peptidyl moieties from peptidyl-tRNA molecules trapped in stalled 50S ribosomal subunits, and thus maintains levels of free tRNAs and 50S ribosomes. This Chlorobaculum parvum (strain DSM 263 / NCIMB 8327) (Chlorobium vibrioforme subsp. thiosulfatophilum) protein is Peptidyl-tRNA hydrolase.